The following is a 171-amino-acid chain: Spiderine-2a (171 aa).

The first 18 residues, 1–18 (MKFALVLLGVCAFYLVNA), serve as a signal peptide directing secretion. Positions 19–58 (TGDLETELEASELQELQEALDLIAETPLESLEAEELEEAR) are cleaved as a propeptide — removed in mature form. The linear cationic cytotoxin domain stretch occupies residues 59-104 (KFKLPKINWGKLASKAKDVYKKGQKLAKNKNVKKALKYGKQLAENL). The Oxytoxin-type inhibitor cystine knot (ICK) domain maps to 118–171 (NNKCWAIGTRCTDDCDCCPEHHCHCPAKSWTFGLIPCSCQVTESDKVNKCPPAE). 5 cysteine pairs are disulfide-bonded: C121–C135, C128–C140, C132–C167, C134–C156, and C142–C154.

In terms of processing, disulfide bonds. Expressed by the venom gland.

The protein resides in the secreted. Has antimicrobial, insecticidal, cytolytic and cytotoxic activity. The polypeptide is Spiderine-2a (Oxyopes takobius (Lynx spider)).